A 297-amino-acid polypeptide reads, in one-letter code: MSERAHIPVLVEECLALFAQRPPQTFRDVTLGAGGHAYAFLEAYPSLTCYDGSDRDLQALAIAEKRLETFQDRVSFSHASFEDLANQPTPRLYDGVLADLGVSSMQLDTLSRGFSFQGEKEELDMRMDQTQELSASDVLNSLKEEELGRIFREYGEEPQWKSAAKAVVHFRKHKKILSIQDVKEALLGVFPHYRFHRKIHPLTLIFQALRVYVNGEDRQLKSLLTSAISWLAPQGRLVIISFCSSEDRPVKWFFKEAEASGLGKVITKKVIQPTYQEVRRNPRSRSAKLRCFEKASQ.

S-adenosyl-L-methionine contacts are provided by residues Gly34–His36, Asp54, Phe81, Asp99, and Gln106.

It belongs to the methyltransferase superfamily. RsmH family.

It is found in the cytoplasm. It carries out the reaction cytidine(1402) in 16S rRNA + S-adenosyl-L-methionine = N(4)-methylcytidine(1402) in 16S rRNA + S-adenosyl-L-homocysteine + H(+). Specifically methylates the N4 position of cytidine in position 1402 (C1402) of 16S rRNA. The sequence is that of Ribosomal RNA small subunit methyltransferase H from Chlamydia pneumoniae (Chlamydophila pneumoniae).